The chain runs to 307 residues: 4-hydroxythreonine-4-phosphate dehydrogenase (307 aa).

The substrate site is built by His121 and Thr122. A divalent metal cation is bound by residues His150, His189, and His245. Substrate contacts are provided by Lys253, Asn262, and Arg271.

This sequence belongs to the PdxA family. Homodimer. It depends on Zn(2+) as a cofactor. Mg(2+) serves as cofactor. Requires Co(2+) as cofactor.

It localises to the cytoplasm. It carries out the reaction 4-(phosphooxy)-L-threonine + NAD(+) = 3-amino-2-oxopropyl phosphate + CO2 + NADH. It functions in the pathway cofactor biosynthesis; pyridoxine 5'-phosphate biosynthesis; pyridoxine 5'-phosphate from D-erythrose 4-phosphate: step 4/5. Functionally, catalyzes the NAD(P)-dependent oxidation of 4-(phosphooxy)-L-threonine (HTP) into 2-amino-3-oxo-4-(phosphooxy)butyric acid which spontaneously decarboxylates to form 3-amino-2-oxopropyl phosphate (AHAP). The protein is 4-hydroxythreonine-4-phosphate dehydrogenase of Sulfurimonas denitrificans (strain ATCC 33889 / DSM 1251) (Thiomicrospira denitrificans (strain ATCC 33889 / DSM 1251)).